Consider the following 501-residue polypeptide: UDP-N-acetylmuramoyl-L-alanyl-D-glutamate--2,6-diaminopimelate ligase (501 aa).

Residue Ser29 participates in UDP-N-acetyl-alpha-D-muramoyl-L-alanyl-D-glutamate binding. 112 to 118 (GTNGKTS) is an ATP binding site. UDP-N-acetyl-alpha-D-muramoyl-L-alanyl-D-glutamate contacts are provided by residues 161–162 (TT), Ser188, and Arg196. Lys228 is modified (N6-carboxylysine). Meso-2,6-diaminopimelate is bound by residues Arg393, 417 to 420 (DNPR), Gly468, and Glu472. A Meso-diaminopimelate recognition motif motif is present at residues 417 to 420 (DNPR).

This sequence belongs to the MurCDEF family. MurE subfamily. The cofactor is Mg(2+). In terms of processing, carboxylation is probably crucial for Mg(2+) binding and, consequently, for the gamma-phosphate positioning of ATP.

Its subcellular location is the cytoplasm. It catalyses the reaction UDP-N-acetyl-alpha-D-muramoyl-L-alanyl-D-glutamate + meso-2,6-diaminopimelate + ATP = UDP-N-acetyl-alpha-D-muramoyl-L-alanyl-gamma-D-glutamyl-meso-2,6-diaminopimelate + ADP + phosphate + H(+). It functions in the pathway cell wall biogenesis; peptidoglycan biosynthesis. Catalyzes the addition of meso-diaminopimelic acid to the nucleotide precursor UDP-N-acetylmuramoyl-L-alanyl-D-glutamate (UMAG) in the biosynthesis of bacterial cell-wall peptidoglycan. This is UDP-N-acetylmuramoyl-L-alanyl-D-glutamate--2,6-diaminopimelate ligase from Acidovorax sp. (strain JS42).